Consider the following 380-residue polypeptide: Cytochrome b (380 aa).

4 consecutive transmembrane segments (helical) span residues 34-54, 78-99, 114-134, and 179-199; these read FGSLLAMCLATQILTGLLLAM, WLIRNLHANGASFFFICIFLHI, WNTGVILLLTLMATAFVGYVL, and FFALHFLLPFVIAGITIIHLI. Positions 84 and 98 each coordinate heme b. The heme b site is built by His183 and His197. His202 serves as a coordination point for a ubiquinone. 4 consecutive transmembrane segments (helical) span residues 227–247, 289–309, 321–341, and 348–368; these read LKDILGLTLMLTPLLTLALFS, LGGVLALAASVLILLLIPFLH, LSQTLFWLLVANLLVLTWVGS, and FIIIGQMASFSYFTILLILFP.

It belongs to the cytochrome b family. The cytochrome bc1 complex contains 11 subunits: 3 respiratory subunits (MT-CYB, CYC1 and UQCRFS1), 2 core proteins (UQCRC1 and UQCRC2) and 6 low-molecular weight proteins (UQCRH/QCR6, UQCRB/QCR7, UQCRQ/QCR8, UQCR10/QCR9, UQCR11/QCR10 and a cleavage product of UQCRFS1). This cytochrome bc1 complex then forms a dimer. Heme b is required as a cofactor.

It localises to the mitochondrion inner membrane. Functionally, component of the ubiquinol-cytochrome c reductase complex (complex III or cytochrome b-c1 complex) that is part of the mitochondrial respiratory chain. The b-c1 complex mediates electron transfer from ubiquinol to cytochrome c. Contributes to the generation of a proton gradient across the mitochondrial membrane that is then used for ATP synthesis. The protein is Cytochrome b (MT-CYB) of Tragopan temminckii (Temminck's tragopan).